Here is a 73-residue protein sequence, read N- to C-terminus: Ubiquitin-like protein 5 (73 aa).

Positions methionine 1 to leucine 73 constitute a Ubiquitin-like domain.

The protein localises to the cytoplasm. The chain is Ubiquitin-like protein 5 (ubl5) from Danio rerio (Zebrafish).